Reading from the N-terminus, the 1367-residue chain is DNA polymerase III PolC-type (1367 aa).

The 156-residue stretch at phenylalanine 358–phenylalanine 513 folds into the Exonuclease domain.

This sequence belongs to the DNA polymerase type-C family. PolC subfamily.

Its subcellular location is the cytoplasm. It catalyses the reaction DNA(n) + a 2'-deoxyribonucleoside 5'-triphosphate = DNA(n+1) + diphosphate. Functionally, required for replicative DNA synthesis. This DNA polymerase also exhibits 3' to 5' exonuclease activity. The protein is DNA polymerase III PolC-type of Thermotoga petrophila (strain ATCC BAA-488 / DSM 13995 / JCM 10881 / RKU-1).